The primary structure comprises 625 residues: Probable potassium transport system protein Kup 2 (625 aa).

12 consecutive transmembrane segments (helical) span residues 15–35, 52–72, 98–118, 134–154, 164–184, 212–232, 246–266, 284–304, 336–356, 365–385, 394–414, and 417–437; these read LSFAALGVVFGDIGTSPLYAF, ILSLIFWSLIIIVSIKYLVIV, GGWLLFITLVGIGLIIGDGML, LSPNLAKYVLPVTLIILFFLF, IGVYFAPVMLVWFITIGILGF, FALFILGGVFLVMTGGEALFA, WFAVALPALLLCYFGQGAFVL, FLPVMIILATLATIIASQAII, VYLPLINFILALGTCSLVVIF, AYGIAVNLDMLITTVLVGIIA, FKILIFLLILIIELAFFAGNI, and LLTGGWIPILIAFLGFVVMYT.

Belongs to the HAK/KUP transporter (TC 2.A.72) family.

Its subcellular location is the cell inner membrane. The catalysed reaction is K(+)(in) + H(+)(in) = K(+)(out) + H(+)(out). Its function is as follows. Transport of potassium into the cell. Likely operates as a K(+):H(+) symporter. The chain is Probable potassium transport system protein Kup 2 from Legionella pneumophila (strain Paris).